The sequence spans 385 residues: 8-amino-7-oxononanoate synthase (385 aa).

Residue R23 coordinates substrate. 110-111 (GF) is a pyridoxal 5'-phosphate binding site. H135 is a substrate binding site. 3 residues coordinate pyridoxal 5'-phosphate: S180, H208, and T234. K237 bears the N6-(pyridoxal phosphate)lysine mark. T350 is a binding site for substrate.

The protein belongs to the class-II pyridoxal-phosphate-dependent aminotransferase family. BioF subfamily. Homodimer. Pyridoxal 5'-phosphate serves as cofactor.

The enzyme catalyses 6-carboxyhexanoyl-[ACP] + L-alanine + H(+) = (8S)-8-amino-7-oxononanoate + holo-[ACP] + CO2. The protein operates within cofactor biosynthesis; biotin biosynthesis. Functionally, catalyzes the decarboxylative condensation of pimeloyl-[acyl-carrier protein] and L-alanine to produce 8-amino-7-oxononanoate (AON), [acyl-carrier protein], and carbon dioxide. The sequence is that of 8-amino-7-oxononanoate synthase from Vibrio vulnificus (strain YJ016).